A 223-amino-acid polypeptide reads, in one-letter code: RNA-free ribonuclease P (223 aa).

The protein belongs to the HARP family.

It carries out the reaction Endonucleolytic cleavage of RNA, removing 5'-extranucleotides from tRNA precursor.. In terms of biological role, RNA-free RNase P that catalyzes the removal of the 5'-leader sequence from pre-tRNA to produce the mature 5'-terminus. The polypeptide is RNA-free ribonuclease P (Methanococcus maripaludis (strain C6 / ATCC BAA-1332)).